A 332-amino-acid polypeptide reads, in one-letter code: MVVLSQPALNQFFLLKPFKSTPLFTGIPVVDLTHPDAKNLIVNACRDFGFFKLVNHGVPLELMANLENEALRFFKKSQSEKDRAGPPDPFGYGSKRIGPNGDVGWVEYLLLNTNPDVISPKSLCIFRENPHHFRAVVENYITAVKNMCYAVLELMAEGLGIRQRNTLSRLLKDEKSDSCFRLNHYPPCPEVQALNRNLVGFGEHTDPQIISVLRSNSTSGLQICLTDGTWVSVPPDQTSFFINVGDALQVMTNGRFKSVKHRVLADTTKSRLSMIYFGGPALSENIAPLPSVMLKGEECLYKEFTWCEYKKAAYTSRLADNRLAPFQKSAAD.

Residues 175-280 form the Fe2OG dioxygenase domain; it reads KSDSCFRLNH…RLSMIYFGGP (106 aa). His-204, Asp-206, and His-261 together coordinate Fe cation. The active site involves Arg-271.

This sequence belongs to the iron/ascorbate-dependent oxidoreductase family. GA2OX subfamily. Fe cation is required as a cofactor.

The enzyme catalyses gibberellin A1 + 2-oxoglutarate + O2 = gibberellin A8 + succinate + CO2. Its pathway is plant hormone biosynthesis; gibberellin biosynthesis. In terms of biological role, catalyzes the 2-beta-hydroxylation of several biologically active gibberellins, leading to the homeostatic regulation of their endogenous level. Catabolism of gibberellins (GAs) plays a central role in plant development. Converts GA9/GA20 to GA51/GA29 and GA4/GA1 to GA34/GA8. This chain is Gibberellin 2-beta-dioxygenase (GA2OX1), found in Phaseolus coccineus (Scarlet runner bean).